The primary structure comprises 131 residues: Probable ATP synthase subunit g 2, mitochondrial (131 aa).

It belongs to the ATPase g subunit family. Subunit of the F-type ATPase which has 2 components, CF(1) - the catalytic core - and CF(0) - the membrane proton channel.

Its subcellular location is the mitochondrion membrane. Its function is as follows. Mitochondrial membrane ATP synthase (F(1)F(0) ATP synthase or Complex V) produces ATP from ADP in the presence of a proton gradient across the membrane which is generated by electron transport complexes of the respiratory chain. F-type ATPases consist of two structural domains, F(1) - containing the extramembraneous catalytic core, and F(0) - containing the membrane proton channel, linked together by a central stalk and a peripheral stalk. During catalysis, ATP synthesis in the catalytic domain of F(1) is coupled via a rotary mechanism of the central stalk subunits to proton translocation. Part of the complex F(0) domain. Minor subunit located with subunit a in the membrane. This chain is Probable ATP synthase subunit g 2, mitochondrial, found in Caenorhabditis elegans.